We begin with the raw amino-acid sequence, 332 residues long: Cinnamoyl-CoA reductase 2 (332 aa).

Residues 12 to 18, Arg37, Lys43, 63 to 64, 83 to 85, Tyr156, Lys160, 183 to 186, and Ser198 contribute to the NADP(+) site; these read GAGGYIA, DL, TAS, and PVLV. The cysteines at positions 149 and 157 are disulfide-linked. The active-site Proton donor is the Lys160.

The protein belongs to the NAD(P)-dependent epimerase/dehydratase family. Dihydroflavonol-4-reductase subfamily. In terms of tissue distribution, expressed at low levels in leaves, stems and flowers.

It carries out the reaction (E)-cinnamaldehyde + NADP(+) + CoA = (E)-cinnamoyl-CoA + NADPH + H(+). It participates in aromatic compound metabolism; phenylpropanoid biosynthesis. Cinnamoyl-CoA reductase probably involved in the formation of phenolic compounds associated with the hypersensitive response. Seems not to be involved in lignin biosynthesis. This is Cinnamoyl-CoA reductase 2 (CCR2) from Arabidopsis thaliana (Mouse-ear cress).